Consider the following 374-residue polypeptide: RNA ligase 1 (374 aa).

The ATP site is built by tyrosine 37, arginine 54, and lysine 75. Catalysis depends on lysine 99, which acts as the N6-AMP-lysine intermediate. ATP is bound by residues glutamate 159, lysine 240, and lysine 242. Residue aspartate 272 coordinates Mg(2+).

The protein belongs to the Tequatrovirus RNA ligase 1 family. Mg(2+) serves as cofactor.

It carries out the reaction ATP + (ribonucleotide)n-3'-hydroxyl + 5'-phospho-(ribonucleotide)m = (ribonucleotide)n+m + AMP + diphosphate.. Functionally, involved in countering a host defense mechanism which, following viral infection, activates the host anticodon nuclease and shuts off viral translation. Repairs 5'-PO4 and 3'-OH groups in the cleaved host tRNA. The nick ligation reaction entails three nucleotidyl transfer steps. In the first step, the RNA ligase reacts with ATP in the absence of nucleic acid to form a covalent ligase-AMP intermediate and release pyrophosphate. In step 2, the ligase-AMP binds to the nicked duplex nucleic acid and transfers the adenylate to the 5'-PO4 terminus to form an adenylylated nicked intermediate. In step 3, the RNA ligase directs the attack of the nick 3'-OH on the 5'-phosphoanhydride linkage, resulting in a repaired 3'-5' phosphodiester and release of AMP. This is RNA ligase 1 (63) from Enterobacteria phage T4 (Bacteriophage T4).